Reading from the N-terminus, the 156-residue chain is Arginine repressor (156 aa).

Belongs to the ArgR family.

It is found in the cytoplasm. Its pathway is amino-acid biosynthesis; L-arginine biosynthesis [regulation]. Its function is as follows. Regulates arginine biosynthesis genes. The protein is Arginine repressor of Shewanella halifaxensis (strain HAW-EB4).